The primary structure comprises 355 residues: MTANINKLARKNIQKLNPYQSARRIGGKGDTWLNANESPISVPFKGKVKVFNRYPECQPNNLLSSYANYVGLLNNQILVTRGADEGIELLIKAFCEPGKDAIIYCPPTYDMYAINAKIANVEIKEIPTFKNTWKIDLLNIRSNLNKVKLIYICNPNNPTGNIVSQEDLKSLLKVTLGQSLVIIDEAYIEFSPKNSMVNYLKTFPNLIILRTLSKAFALAGIRCGFTLAQKEVIDILHKVISPYPISTLIADIAVQSLEKKAIDDMKNRVLKLNMNRIWLIDELKKISCVKKVFDSHANYILVEFYMFKKIFQSLWQKGIILRNQNHKNNLKNCLRISIGSKSECMRLVQELKNFI.

Lysine 214 carries the post-translational modification N6-(pyridoxal phosphate)lysine.

It belongs to the class-II pyridoxal-phosphate-dependent aminotransferase family. Histidinol-phosphate aminotransferase subfamily. Homodimer. Pyridoxal 5'-phosphate is required as a cofactor.

The catalysed reaction is L-histidinol phosphate + 2-oxoglutarate = 3-(imidazol-4-yl)-2-oxopropyl phosphate + L-glutamate. The protein operates within amino-acid biosynthesis; L-histidine biosynthesis; L-histidine from 5-phospho-alpha-D-ribose 1-diphosphate: step 7/9. The chain is Histidinol-phosphate aminotransferase (hisC) from Buchnera aphidicola subsp. Schizaphis graminum (strain Sg).